Reading from the N-terminus, the 432-residue chain is Transcriptional adapter 3 (432 aa).

K21 is covalently cross-linked (Glycyl lysine isopeptide (Lys-Gly) (interchain with G-Cter in SUMO2)). Residues 40-69 are a coiled coil; the sequence is IEELDTLQLELETLLSSASRRLRVLEAETQ. The segment at 87 to 127 is disordered; that stretch reads GRDHELGAPPKHGKPKKQKLEGKAGHGPGPGPGRPKSKNLQ. Residue K129 forms a Glycyl lysine isopeptide (Lys-Gly) (interchain with G-Cter in SUMO2) linkage. Composition is skewed to basic and acidic residues over residues 211–223 and 232–251; these read DGAR…DKKK and LDTK…HEQP. 2 disordered regions span residues 211–257 and 271–319; these read DGAR…GCPF and ENII…SRIK. Residues S280 and S298 each carry the phosphoserine modification. The span at 295–305 shows a compositional bias: polar residues; that stretch reads ASTSPRNQNKP. Residues 367–407 adopt a coiled-coil conformation; that stretch reads LLRLAKEEVSRQELRQRVRMADNEVMDAFRKIMAARQKKRT. K418 carries the post-translational modification N6-acetyllysine.

It belongs to the NGG1 family. As to quaternary structure, the PCAF complex is composed of a number of TBP-associated factors (TAFS), such as TAF5, TAF5L, TAF6, TAF6L, TAF9, TAF10 and TAF12, PCAF, and also PCAF-associated factors (PAFs), such as TADA2L/ADA2, TADA3L/ADA3 and SPT3. Interacts directly with TADA2L and PCAF and also with the high-risk HPV oncoprotein E6. Component of the STAGA transcription coactivator-HAT complex, at least composed of SUPT3H, GCN5L2, TAF5L, TAF6L, SUPT7L, TADA3L, TAD1L, TAF10, TAF12, TRRAP and TAF9. Component of the TFTC-HAT complex. Component of the ADA2A-containing complex (ATAC), composed of KAT14, KAT2A, TADA2L, TADA3L, ZZ3, MBIP, WDR5, YEATS2, CCDC101 and DR1.

The protein resides in the nucleus. In terms of biological role, functions as a component of the PCAF complex. The PCAF complex is capable of efficiently acetylating histones in a nucleosomal context. The PCAF complex could be considered as the human version of the yeast SAGA complex. Also known as a coactivator for p53/TP53-dependent transcriptional activation. Component of the ATAC complex, a complex with histone acetyltransferase activity on histones H3 and H4. This Pongo abelii (Sumatran orangutan) protein is Transcriptional adapter 3 (TADA3).